We begin with the raw amino-acid sequence, 271 residues long: Aminoglycoside 3'-phosphotransferase (271 aa).

The active-site Proton acceptor is aspartate 198.

It belongs to the aminoglycoside phosphotransferase family.

The enzyme catalyses kanamycin A + ATP = kanamycin 3'-phosphate + ADP + H(+). Its function is as follows. Resistance to kanamycin and structurally-related aminoglycosides, including amikacin. The protein is Aminoglycoside 3'-phosphotransferase (aphA) of Escherichia coli.